A 408-amino-acid polypeptide reads, in one-letter code: MIPNEKLKLLGLLSISFFLQWYLANTWIAEFLYRRIEVSTPVSGFLRVREGLYLYENGLDPYSGGVFYQSPLLLILNYCCELLGGISVTRFVYTSISTMGGLFVYLIAKQARVLDPNQVLSTCSPLWISVIYLLNPLTFLPGIACSADMILNFTTLMTIYFASCGSYAIYACCMALTVFINPNALLLFFPSYLILRKCNSSIKFRQIFVVFLFYLAGLIITSGFFLNSLSFLKIPFRVYLDSHDLTPNLGLWWYFFTEMFNEFRTFFLFVFAILPLMFVLPVSIRLYYLPLPITIALIGLHSLFKAYPSICDLSIFLSLLPIFNKVQDRMRYSLLTNNAIVFALVLGSAFYHSWITLGCGNANFYYASNLILALGLSLKIMDFLKALLLVDWYANHPQHENIPLKQVQ.

A run of 10 helical transmembrane segments spans residues Leu9 to Ala29, Val66 to Ile86, Val88 to Ala108, Pro125 to Cys145, Met149 to Ile169, Ile207 to Asn227, Phe266 to Leu286, Leu303 to Phe323, Ala339 to Cys359, and Leu370 to Val390. The may be involved in recognition of long-chain fatty acids in GPI stretch occupies residues Pro247–Phe267.

Belongs to the PIGU family. In terms of assembly, forms a complex with PIG-S homolog, PIG-T homolog and GPI8.

The protein resides in the endoplasmic reticulum membrane. It functions in the pathway glycolipid biosynthesis; glycosylphosphatidylinositol-anchor biosynthesis. Functionally, component of the GPI transamidase complex. May be involved in the recognition of either the GPI attachment signal or the lipid portion of GPI. The protein is GPI transamidase component GAB1 homolog of Schizosaccharomyces pombe (strain 972 / ATCC 24843) (Fission yeast).